The following is a 134-amino-acid chain: Ribonuclease VapC1 (134 aa).

One can recognise a PINc domain in the interval 4 to 123 (IIDTSIIIAL…LNVKDFKRIQ (120 aa)). Residues D6 and D97 each coordinate Mg(2+).

This sequence belongs to the PINc/VapC protein family. Requires Mg(2+) as cofactor.

In terms of biological role, toxic component of a type II toxin-antitoxin (TA) system. Has ssRNase activity. Upon expression in E.coli inhibits growth in liquid culture; this toxic effect is neutralized by coexpression with cognate antitoxin VapB1. Its RNase activity is partially inhibited in vitro by VapB1. In Rickettsia felis (strain ATCC VR-1525 / URRWXCal2) (Rickettsia azadi), this protein is Ribonuclease VapC1.